Reading from the N-terminus, the 455-residue chain is Venom prothrombin activator notecarin-D1 (455 aa).

Positions 1 to 20 (MAPQLLLCLILTFLWSLPEA) are cleaved as a signal peptide. The propeptide occupies 21 to 40 (ESNVFLKSKVANRFLQRTKR). The Gla domain maps to 41–86 (SNSLFEEIRPGNIERECIEEKCSKEEAREVFEDNEKTETFWNVYVD). Glu46, Glu47, Glu54, Glu56, Glu59, Glu60, Glu65, Glu66, Glu69, Glu72, and Glu75 each carry 4-carboxyglutamate. A disulfide bond links Cys57 and Cys62. The region spanning 86-122 (DGDQCSSNPCHYRGTCKDGIGSYTCTCLPNYEGKNCE) is the EGF-like 1; calcium-binding domain. 11 disulfide bridges follow: Cys90–Cys101, Cys95–Cys110, Cys112–Cys121, Cys129–Cys140, Cys136–Cys149, Cys151–Cys164, Cys172–Cys328, Cys216–Cys221, Cys236–Cys252, Cys376–Cys390, and Cys401–Cys429. A glycan (O-linked (Hex...) serine) is linked at Ser92. Residues 129–164 (CRVDNGNCWHFCKRVQSETQCSCAESYRLGVDGHSC) form the EGF-like 2 domain. Positions 182–209 (REASLPDFVQSQKATLLKKSDNPSPDIR) are cleaved as a propeptide — activation peptide. Positions 210 to 453 (IVNGMDCKLG…FIPWIKKIMS (244 aa)) constitute a Peptidase S1 domain. Residue His251 is the Charge relay system of the active site. Residue Asn254 is glycosylated (N-linked (GlcNAc...) asparagine). Catalysis depends on Asp308, which acts as the Charge relay system. The Charge relay system role is filled by Ser405.

This sequence belongs to the peptidase S1 family. Snake venom subfamily. As to quaternary structure, heterodimer of a light chain and a heavy chain; disulfide-linked. In terms of processing, gamma-carboxyglutamate residues are formed by vitamin K dependent carboxylation. These residues are essential for the binding of calcium. In terms of tissue distribution, expressed by the venom gland.

The protein localises to the secreted. The catalysed reaction is Selective cleavage of Arg-|-Thr and then Arg-|-Ile bonds in prothrombin to form thrombin.. Functionally, snake prothrombin activator that attacks the hemostatic system of prey. This protein is functionally similar to blood coagulation factor Xa. This Notechis scutatus scutatus (Mainland tiger snake) protein is Venom prothrombin activator notecarin-D1.